The following is a 423-amino-acid chain: uncharacterized protein (423 aa).

Belongs to the asfivirus E423R family.

The protein localises to the virion. This is an uncharacterized protein from African swine fever virus (isolate Pig/Kenya/KEN-50/1950) (ASFV).